The following is an 82-amino-acid chain: MKVAILFLSILVLAVASESIEESRDDFAVEELGRATCAGQDQPCKETCDCCGERGECVCGGPCICRQGYFWIAWYKLANCKK.

Residues 1 to 17 (MKVAILFLSILVLAVAS) form the signal peptide. Positions 18 to 34 (ESIEESRDDFAVEELGR) are excised as a propeptide. 5 disulfide bridges follow: C37/C51, C44/C57, C48/C80, C50/C65, and C59/C63.

This sequence belongs to the neurotoxin 03 (Tx2) family. 06 subfamily. As to expression, expressed by the venom gland.

It is found in the secreted. Its function is as follows. Toxin that is known to potentiate erectile function. It binds voltage-dependently to sodium channels (Nav), inhibits the inactivation of the activated channels and decreases the peak inward current. The toxin delays inactivation of Nav1.2/SCN2A, Nav1.3/SCN3A, Nav1.4/SCN4A and Nav1.8/SCN10A, slows the inactivation process and decreases the sodium peak amplitude of Nav1.5/SCN5A and Nav1.6/SCN8A. In vivo, it enhances erectile function by inducing the release of nictric oxide (NO): it slows the sodium current, leading to depolarization, which leads to an increase in calcium influx (probably via activation of N-type calcium channels) which in turn activates neuronal NO synthase (nNOS/NOS1), inducing nitric oxide (NO) production. In a final step, NO activates soluble guanylate cyclase (GUCY1A1/GUCY1B1) which in turn increases cGMP formation, resulting in penile erection. It is noteworthy that the toxin does not provoke erection by inhibiting phosphodiesterase type 5 (PDE5A), an enzyme that hydrolysis cGMP. In vivo, it also causes scratching, lacrimation, hypersalivation, sweating and agitation followed by spastic paralysis of the anterior and posterior extremities and death at dose levels of 0.79 mg/mouse. It is insecticidal to the larval and adult forms of the house fly. The toxin also improves cavernosal relaxation in different models where erectile dysfunction is observed, such as deoxycorticosterone-acetate (DOCA)-salt hypertensive rats, mice models for type-1 diabetes, as well as elderly rats. The chain is Delta-ctenitoxin-Pn2a from Phoneutria nigriventer (Brazilian armed spider).